The sequence spans 187 residues: Elongation factor P (187 aa).

It belongs to the elongation factor P family.

It localises to the cytoplasm. The protein operates within protein biosynthesis; polypeptide chain elongation. Functionally, involved in peptide bond synthesis. Stimulates efficient translation and peptide-bond synthesis on native or reconstituted 70S ribosomes in vitro. Probably functions indirectly by altering the affinity of the ribosome for aminoacyl-tRNA, thus increasing their reactivity as acceptors for peptidyl transferase. This Erythrobacter litoralis (strain HTCC2594) protein is Elongation factor P.